Reading from the N-terminus, the 223-residue chain is UPF0441 protein ETA_04310 (223 aa).

Positions 166-223 (YGAATPGRTMTVPKSALAPKPATTSTVTRGGFGESVAKQNTMQRNSSSTGSANRSMGG) are disordered. A compositionally biased stretch (polar residues) spans 202–223 (AKQNTMQRNSSSTGSANRSMGG).

This sequence belongs to the UPF0441 family.

The protein is UPF0441 protein ETA_04310 of Erwinia tasmaniensis (strain DSM 17950 / CFBP 7177 / CIP 109463 / NCPPB 4357 / Et1/99).